Here is a 443-residue protein sequence, read N- to C-terminus: Chromosomal replication initiator protein DnaA (443 aa).

The tract at residues 1–73 is domain I, interacts with DnaA modulators; sequence MYGDHRQIWE…YDAASKATNK (73 aa). The interval 73–106 is domain II; the sequence is KLYEIKILSEDEEEYREIKESIEKENLTESTTLS. The domain III, AAA+ region stretch occupies residues 107–323; it reads TLNPKYTFDT…GALIRIVAFS (217 aa). G151, G153, K154, and T155 together coordinate ATP. Residues 324 to 443 form a domain IV, binds dsDNA region; the sequence is NLTKANIDLE…EELKKRIKGY (120 aa).

The protein belongs to the DnaA family. As to quaternary structure, oligomerizes as a right-handed, spiral filament on DNA at oriC.

The protein resides in the cytoplasm. Plays an essential role in the initiation and regulation of chromosomal replication. ATP-DnaA binds to the origin of replication (oriC) to initiate formation of the DNA replication initiation complex once per cell cycle. Binds the DnaA box (a 9 base pair repeat at the origin) and separates the double-stranded (ds)DNA. Forms a right-handed helical filament on oriC DNA; dsDNA binds to the exterior of the filament while single-stranded (ss)DNA is stabiized in the filament's interior. The ATP-DnaA-oriC complex binds and stabilizes one strand of the AT-rich DNA unwinding element (DUE), permitting loading of DNA polymerase. After initiation quickly degrades to an ADP-DnaA complex that is not apt for DNA replication. Binds acidic phospholipids. The sequence is that of Chromosomal replication initiator protein DnaA from Thermoanaerobacter pseudethanolicus (strain ATCC 33223 / 39E) (Clostridium thermohydrosulfuricum).